The sequence spans 52 residues: MLHYAIIFFVIAIIAAVLGFSGIAGAATNIAWILFVVFLILAVISMFRRGKV.

A run of 2 helical transmembrane segments spans residues A5 to G25 and A27 to F47.

The protein belongs to the UPF0391 family.

It localises to the cell membrane. This chain is UPF0391 membrane protein XCV0245, found in Xanthomonas euvesicatoria pv. vesicatoria (strain 85-10) (Xanthomonas campestris pv. vesicatoria).